Consider the following 361-residue polypeptide: tRNA/tmRNA (uracil-C(5))-methyltransferase (361 aa).

S-adenosyl-L-methionine-binding residues include Gln-185, Tyr-213, Asn-218, Glu-234, and Asp-294. Catalysis depends on Cys-319, which acts as the Nucleophile. Glu-353 acts as the Proton acceptor in catalysis.

Belongs to the class I-like SAM-binding methyltransferase superfamily. RNA M5U methyltransferase family. TrmA subfamily.

The enzyme catalyses uridine(54) in tRNA + S-adenosyl-L-methionine = 5-methyluridine(54) in tRNA + S-adenosyl-L-homocysteine + H(+). It catalyses the reaction uridine(341) in tmRNA + S-adenosyl-L-methionine = 5-methyluridine(341) in tmRNA + S-adenosyl-L-homocysteine + H(+). In terms of biological role, dual-specificity methyltransferase that catalyzes the formation of 5-methyluridine at position 54 (m5U54) in all tRNAs, and that of position 341 (m5U341) in tmRNA (transfer-mRNA). This is tRNA/tmRNA (uracil-C(5))-methyltransferase from Pseudomonas savastanoi pv. phaseolicola (strain 1448A / Race 6) (Pseudomonas syringae pv. phaseolicola (strain 1448A / Race 6)).